Consider the following 261-residue polypeptide: Probable septum site-determining protein MinC (261 aa).

Residues 106-144 (RAPAAKPADEAEPAAVPAVETAAAPAAAAAPEQSSDPAP) are disordered. Over residues 118-144 (PAAVPAVETAAAPAAAAAPEQSSDPAP) the composition is skewed to low complexity.

It belongs to the MinC family. In terms of assembly, interacts with MinD and FtsZ.

In terms of biological role, cell division inhibitor that blocks the formation of polar Z ring septums. Rapidly oscillates between the poles of the cell to destabilize FtsZ filaments that have formed before they mature into polar Z rings. Prevents FtsZ polymerization. The chain is Probable septum site-determining protein MinC from Burkholderia orbicola (strain MC0-3).